A 602-amino-acid polypeptide reads, in one-letter code: Elongation factor 4 (602 aa).

Residues 7–189 enclose the tr-type G domain; it reads KFIRNFSIIA…QLVVAIPPPV (183 aa). GTP-binding positions include 19 to 24 and 136 to 139; these read DHGKST and NKID.

It belongs to the TRAFAC class translation factor GTPase superfamily. Classic translation factor GTPase family. LepA subfamily.

The protein localises to the cell inner membrane. The enzyme catalyses GTP + H2O = GDP + phosphate + H(+). Required for accurate and efficient protein synthesis under certain stress conditions. May act as a fidelity factor of the translation reaction, by catalyzing a one-codon backward translocation of tRNAs on improperly translocated ribosomes. Back-translocation proceeds from a post-translocation (POST) complex to a pre-translocation (PRE) complex, thus giving elongation factor G a second chance to translocate the tRNAs correctly. Binds to ribosomes in a GTP-dependent manner. In Coxiella burnetii (strain Dugway 5J108-111), this protein is Elongation factor 4.